An 822-amino-acid polypeptide reads, in one-letter code: Probable phosphoketolase (822 aa).

This sequence belongs to the XFP family. Thiamine diphosphate is required as a cofactor.

The chain is Probable phosphoketolase from Nocardia farcinica (strain IFM 10152).